Reading from the N-terminus, the 500-residue chain is Glutamate--tRNA ligase (500 aa).

Residues 12–22 (PSPTGHLHIGN) carry the 'HIGH' region motif. The 'KMSKS' region motif lies at 259 to 263 (KLSKR). An ATP-binding site is contributed by Lys262.

Belongs to the class-I aminoacyl-tRNA synthetase family. Glutamate--tRNA ligase type 1 subfamily. As to quaternary structure, monomer.

It localises to the cytoplasm. The catalysed reaction is tRNA(Glu) + L-glutamate + ATP = L-glutamyl-tRNA(Glu) + AMP + diphosphate. Functionally, catalyzes the attachment of glutamate to tRNA(Glu) in a two-step reaction: glutamate is first activated by ATP to form Glu-AMP and then transferred to the acceptor end of tRNA(Glu). The chain is Glutamate--tRNA ligase from Lactobacillus delbrueckii subsp. bulgaricus (strain ATCC BAA-365 / Lb-18).